Consider the following 338-residue polypeptide: Anthranilate phosphoribosyltransferase (338 aa).

5-phospho-alpha-D-ribose 1-diphosphate contacts are provided by residues glycine 81, glycine 84–aspartate 85, threonine 89, asparagine 91–threonine 94, lysine 109–serine 117, and serine 121. Anthranilate is bound at residue glycine 81. Serine 93 serves as a coordination point for Mg(2+). Anthranilate is bound at residue asparagine 112. Arginine 167 contributes to the anthranilate binding site. The Mg(2+) site is built by aspartate 226 and glutamate 227.

Belongs to the anthranilate phosphoribosyltransferase family. Homodimer. Requires Mg(2+) as cofactor.

The enzyme catalyses N-(5-phospho-beta-D-ribosyl)anthranilate + diphosphate = 5-phospho-alpha-D-ribose 1-diphosphate + anthranilate. The protein operates within amino-acid biosynthesis; L-tryptophan biosynthesis; L-tryptophan from chorismate: step 2/5. In terms of biological role, catalyzes the transfer of the phosphoribosyl group of 5-phosphorylribose-1-pyrophosphate (PRPP) to anthranilate to yield N-(5'-phosphoribosyl)-anthranilate (PRA). The polypeptide is Anthranilate phosphoribosyltransferase (Acidithiobacillus ferrooxidans (strain ATCC 23270 / DSM 14882 / CIP 104768 / NCIMB 8455) (Ferrobacillus ferrooxidans (strain ATCC 23270))).